The sequence spans 308 residues: MSHQLPDVQASQPDVTVGLSQVGVTGVEKLVKIARDGKRPLVLMAEFEVFVDLPGGRKGIDMSRNMQVIDEVLEAAVSEPAYRVEDMCGDAAERLLAKHEYTTTAEVSMTAELVVREDTPASGLSTQSTAEIIASATATDEGTREEIGAEVVGMTVCPCSQGMSASRARDVLQDLAVDDDTIEEFLDKVPQPGHSQRGHATLTVETQGSPEVDLMDLIDIARDSMSARIYNLAKRPDEDHMTYHAHANAKFVEDCVRSMAELSLEALDHLGDDAVVHMKQSNDESIHQHNAHAEREVTLGQLRDELDA.

A disordered region spans residues 282 to 308 (NDESIHQHNAHAEREVTLGQLRDELDA).

It belongs to the GTP cyclohydrolase IV family. In terms of assembly, homodimer. It depends on Fe(2+) as a cofactor.

It catalyses the reaction GTP + H2O = 7,8-dihydroneopterin 2',3'-cyclic phosphate + formate + diphosphate + H(+). It functions in the pathway cofactor biosynthesis; 5,6,7,8-tetrahydromethanopterin biosynthesis. Converts GTP to 7,8-dihydro-D-neopterin 2',3'-cyclic phosphate, the first intermediate in the biosynthesis of coenzyme methanopterin. Involved in archaeosine (G(+)) and folate biosynthesis. In Haloferax volcanii (strain ATCC 29605 / DSM 3757 / JCM 8879 / NBRC 14742 / NCIMB 2012 / VKM B-1768 / DS2) (Halobacterium volcanii), this protein is GTP cyclohydrolase MptA.